The sequence spans 360 residues: Methyltransferase pvhD (360 aa).

S-adenosyl-L-methionine-binding positions include 201–202, Asp227, 251–252, Arg267, and Arg268; these read SG and DL.

The protein belongs to the class I-like SAM-binding methyltransferase superfamily. Cation-independent O-methyltransferase family.

It functions in the pathway secondary metabolite biosynthesis. Its function is as follows. Methyltransferase; part of the gene cluster that mediates the biosynthesis of varicidin A, an antifungal natural product containing a cis-octahydrodecalin core. The PKS module of pvhA together with the enoylreductase pvhC catalyze the formation of the polyketide unit which is then conjugated to L-isoleucine by the condensation domain of the NRPS module. Activity of the Dieckmann cyclase domain (RED) of pvhA results in release of an acyclic tetramate. The cytochrome P450 monooxygenase pvhE then catalyzes the oxidation of the C21 methyl group to a to carboxylate group. The methyltransferase pvhD then further methylates the pvhE product. The Diels-Alderase pvhB is able to catalyze Diels-Alder cycloaddition using both pvhE and pvhD products as substrates to form the decalin ring, yielding varicidin B and A, respectively. The chain is Methyltransferase pvhD from Talaromyces variabilis (Penicillium variabile).